The primary structure comprises 259 residues: MAKRIDVSGLHVYYGDFLAVEDVSMTIEPRSVTAFIGSSGCGKSTFLRTLNRMHEVTPGARVEGKVLLDDQDIYAPDVDPVEVRREVGMVFQRPNPFPTMSIYDNVIAGYKLNNRRLRKSEADEIVERSLRGANLWEEVKDRLDRPGASLSGGQQQRLCIARAIAVEPSVLLMDEPCSALDPISTLAIEDLISQLKENYTIVIVTHNMQQAARVSDVTAFFNLAGTGKPGKLIEIGETNKIFTKPEKKETENYITGRFG.

One can recognise an ABC transporter domain in the interval 5–248; sequence IDVSGLHVYY…NKIFTKPEKK (244 aa). An ATP-binding site is contributed by 37–44; the sequence is GSSGCGKS.

The protein belongs to the ABC transporter superfamily. Phosphate importer (TC 3.A.1.7) family. In terms of assembly, the complex is composed of two ATP-binding proteins (PstB), two transmembrane proteins (PstC and PstA) and a solute-binding protein (PstS).

The protein resides in the cell membrane. The enzyme catalyses phosphate(out) + ATP + H2O = ADP + 2 phosphate(in) + H(+). Part of the ABC transporter complex PstSACB involved in phosphate import. Responsible for energy coupling to the transport system. The sequence is that of Phosphate import ATP-binding protein PstB from Thermobifida fusca (strain YX).